The primary structure comprises 165 residues: 3-isopropylmalate dehydratase small subunit (165 aa).

It belongs to the LeuD family. LeuD type 2 subfamily. In terms of assembly, heterodimer of LeuC and LeuD.

The catalysed reaction is (2R,3S)-3-isopropylmalate = (2S)-2-isopropylmalate. It participates in amino-acid biosynthesis; L-leucine biosynthesis; L-leucine from 3-methyl-2-oxobutanoate: step 2/4. In terms of biological role, catalyzes the isomerization between 2-isopropylmalate and 3-isopropylmalate, via the formation of 2-isopropylmaleate. In Lachnoclostridium phytofermentans (strain ATCC 700394 / DSM 18823 / ISDg) (Clostridium phytofermentans), this protein is 3-isopropylmalate dehydratase small subunit.